The primary structure comprises 507 residues: tRNA (guanine(6)-N(2))-methyltransferase THUMP3 (507 aa).

Positions 165-285 (KIDQRNVKKE…DNEVIVGIAL (121 aa)) constitute a THUMP domain.

It belongs to the methyltransferase superfamily. As to quaternary structure, part of the heterodimeric THUMPD3-TRM112 methyltransferase complex; this complex forms an active tRNA methyltransferase, where TRMT112 acts as an activator of the catalytic subunit THUMPD3.

The protein resides in the cytoplasm. It catalyses the reaction guanosine(6) in tRNA + S-adenosyl-L-methionine = N(2)-methylguanosine(6) in tRNA + S-adenosyl-L-homocysteine + H(+). The catalysed reaction is guanosine(7) in tRNA + S-adenosyl-L-methionine = N(2)-methylguanosine(7) in tRNA + S-adenosyl-L-homocysteine + H(+). Functionally, catalytic subunit of the THUMPD3-TRM112 methyltransferase complex, that specifically mediates the S-adenosyl-L-methionine-dependent N(2)-methylation of guanosine nucleotide at position 6 (m2G6) in tRNAs. This is one of the major tRNA (guanine-N(2))-methyltransferases. Also catalyzes the S-adenosyl-L-methionine-dependent N(2)-methylation of guanosine nucleotide at position 7 of tRNA(Trp). The sequence is that of tRNA (guanine(6)-N(2))-methyltransferase THUMP3 from Homo sapiens (Human).